The chain runs to 227 residues: Cytochrome c oxidase subunit 2 (227 aa).

Topologically, residues 1–14 are mitochondrial intermembrane; the sequence is MAYPFQLGLQDATS. Residues 15–45 form a helical membrane-spanning segment; it reads PIMEELTNFHDHTLMIVFLISSLVLYIISLM. The Mitochondrial matrix portion of the chain corresponds to 46–59; sequence LTTKLTHTSTMDAQ. The helical transmembrane segment at 60–87 threads the bilayer; sequence EVETIWTILPAAILILIALPSLRILYMM. Over 88-227 the chain is Mitochondrial intermembrane; that stretch reads DEINNPVLTV…YFENWSTSMI (140 aa). 6 residues coordinate Cu cation: His161, Cys196, Glu198, Cys200, His204, and Met207. Glu198 is a Mg(2+) binding site. Tyr218 bears the Phosphotyrosine mark.

Belongs to the cytochrome c oxidase subunit 2 family. In terms of assembly, component of the cytochrome c oxidase (complex IV, CIV), a multisubunit enzyme composed of 14 subunits. The complex is composed of a catalytic core of 3 subunits MT-CO1, MT-CO2 and MT-CO3, encoded in the mitochondrial DNA, and 11 supernumerary subunits COX4I, COX5A, COX5B, COX6A, COX6B, COX6C, COX7A, COX7B, COX7C, COX8 and NDUFA4, which are encoded in the nuclear genome. The complex exists as a monomer or a dimer and forms supercomplexes (SCs) in the inner mitochondrial membrane with NADH-ubiquinone oxidoreductase (complex I, CI) and ubiquinol-cytochrome c oxidoreductase (cytochrome b-c1 complex, complex III, CIII), resulting in different assemblies (supercomplex SCI(1)III(2)IV(1) and megacomplex MCI(2)III(2)IV(2)). Found in a complex with TMEM177, COA6, COX18, COX20, SCO1 and SCO2. Interacts with TMEM177 in a COX20-dependent manner. Interacts with COX20. Interacts with COX16. It depends on Cu cation as a cofactor.

Its subcellular location is the mitochondrion inner membrane. It catalyses the reaction 4 Fe(II)-[cytochrome c] + O2 + 8 H(+)(in) = 4 Fe(III)-[cytochrome c] + 2 H2O + 4 H(+)(out). Its function is as follows. Component of the cytochrome c oxidase, the last enzyme in the mitochondrial electron transport chain which drives oxidative phosphorylation. The respiratory chain contains 3 multisubunit complexes succinate dehydrogenase (complex II, CII), ubiquinol-cytochrome c oxidoreductase (cytochrome b-c1 complex, complex III, CIII) and cytochrome c oxidase (complex IV, CIV), that cooperate to transfer electrons derived from NADH and succinate to molecular oxygen, creating an electrochemical gradient over the inner membrane that drives transmembrane transport and the ATP synthase. Cytochrome c oxidase is the component of the respiratory chain that catalyzes the reduction of oxygen to water. Electrons originating from reduced cytochrome c in the intermembrane space (IMS) are transferred via the dinuclear copper A center (CU(A)) of subunit 2 and heme A of subunit 1 to the active site in subunit 1, a binuclear center (BNC) formed by heme A3 and copper B (CU(B)). The BNC reduces molecular oxygen to 2 water molecules using 4 electrons from cytochrome c in the IMS and 4 protons from the mitochondrial matrix. In Arvicanthis somalicus (Neumann's grass rat), this protein is Cytochrome c oxidase subunit 2 (MT-CO2).